The primary structure comprises 1124 residues: Translation initiation factor IF-2 (1124 aa).

Over residues 32 to 41 (IAAKSHSSSI) the composition is skewed to low complexity. Disordered stretches follow at residues 32 to 451 (IAAK…QKVH) and 480 to 523 (LARP…RAAR). Over residues 94 to 104 (ATSSSEISQVK) the composition is skewed to polar residues. Positions 134–173 (VNPTTTPTSSPPKTAARPVNAPISRPATPSRPSAPTPRSA) are enriched in low complexity. Residues 192 to 203 (GQTSTSSKATTV) show a composition bias toward polar residues. Residues 214–227 (SRPQSPAAPGRSAP) show a composition bias toward low complexity. 2 stretches are compositionally biased toward basic and acidic residues: residues 235-246 (SDRKAPKPELVG) and 261-272 (PEPEGQRPDKKR). Composition is skewed to low complexity over residues 274 to 283 (GISPRPIGGP) and 411 to 422 (RPAQAPAAGAPR). Basic and acidic residues predominate over residues 425–439 (GRPDWDDSAKLEALR). Composition is skewed to basic residues over residues 484–493 (AKPKSQKKPA) and 500–514 (LRKR…RQRR). Residues 615–787 (RRPPVVTVMG…ILLVTEVEDL (173 aa)) form the tr-type G domain. Positions 624–631 (GHVDHGKT) are G1. 624 to 631 (GHVDHGKT) is a GTP binding site. The segment at 649–653 (GITQH) is G2. The segment at 674-677 (DTPG) is G3. Residues 674–678 (DTPGH) and 728–731 (NKTD) contribute to the GTP site. The segment at 728–731 (NKTD) is G4. The G5 stretch occupies residues 764-766 (SAI).

The protein belongs to the TRAFAC class translation factor GTPase superfamily. Classic translation factor GTPase family. IF-2 subfamily.

It is found in the cytoplasm. Its function is as follows. One of the essential components for the initiation of protein synthesis. Protects formylmethionyl-tRNA from spontaneous hydrolysis and promotes its binding to the 30S ribosomal subunits. Also involved in the hydrolysis of GTP during the formation of the 70S ribosomal complex. The sequence is that of Translation initiation factor IF-2 from Prochlorococcus marinus (strain MIT 9303).